A 227-amino-acid polypeptide reads, in one-letter code: Ribonuclease HII (227 aa).

Residues 16-205 (SLLAGVDEVG…VKMALDAVGV (190 aa)) enclose the RNase H type-2 domain. Residues Asp22, Glu23, and Asp114 each coordinate a divalent metal cation.

The protein belongs to the RNase HII family. It depends on Mn(2+) as a cofactor. Requires Mg(2+) as cofactor.

It is found in the cytoplasm. The catalysed reaction is Endonucleolytic cleavage to 5'-phosphomonoester.. Endonuclease that specifically degrades the RNA of RNA-DNA hybrids. This chain is Ribonuclease HII, found in Marinobacter nauticus (strain ATCC 700491 / DSM 11845 / VT8) (Marinobacter aquaeolei).